The following is a 183-amino-acid chain: Holliday junction branch migration complex subunit RuvA (183 aa).

Residues methionine 1–leucine 63 form a domain I region. The tract at residues glutamate 64–asparagine 141 is domain II. A region of interest (flexible linker) is located at residue asparagine 141. A domain III region spans residues asparagine 141–serine 183.

Belongs to the RuvA family. Homotetramer. Forms an RuvA(8)-RuvB(12)-Holliday junction (HJ) complex. HJ DNA is sandwiched between 2 RuvA tetramers; dsDNA enters through RuvA and exits via RuvB. An RuvB hexamer assembles on each DNA strand where it exits the tetramer. Each RuvB hexamer is contacted by two RuvA subunits (via domain III) on 2 adjacent RuvB subunits; this complex drives branch migration. In the full resolvosome a probable DNA-RuvA(4)-RuvB(12)-RuvC(2) complex forms which resolves the HJ.

It is found in the cytoplasm. Functionally, the RuvA-RuvB-RuvC complex processes Holliday junction (HJ) DNA during genetic recombination and DNA repair, while the RuvA-RuvB complex plays an important role in the rescue of blocked DNA replication forks via replication fork reversal (RFR). RuvA specifically binds to HJ cruciform DNA, conferring on it an open structure. The RuvB hexamer acts as an ATP-dependent pump, pulling dsDNA into and through the RuvAB complex. HJ branch migration allows RuvC to scan DNA until it finds its consensus sequence, where it cleaves and resolves the cruciform DNA. This is Holliday junction branch migration complex subunit RuvA from Helicobacter pylori (strain G27).